A 622-amino-acid chain; its full sequence is Gamma tubulin complex adapter SPC72 (622 aa).

Disordered stretches follow at residues 1–58 (MVRR…PALM) and 221–263 (DKEE…IHDS). A compositionally biased stretch (polar residues) spans 228–238 (LAQSSPAGSQL). Residues 239–250 (ESRDSPSSKEEN) show a composition bias toward basic and acidic residues.

As to quaternary structure, homooligomer. Interacts with CDC5, KAR1, KIN4, SPC97, SPC98, STU2 and TUB4. Phosphorylated by CDC5.

Its subcellular location is the cytoplasm. It localises to the cytoskeleton. The protein localises to the microtubule organizing center. It is found in the spindle pole body. Functionally, spindle pole body (SPB) component that acts as the gamma-tubulin complex-binding protein of the SPB outer plaque. Anchors cytoplasmic microtubules at the half bridge of the spindle pole body (SPB) and accordingly functions in nuclear position and spindle orientation, including anaphase spindle migration into the bud. Recruits KIN4 kinase to both SPBs when cytoplasmic microtubules are defective, to delay mitotic exit. Links cytoplasmic microtubules with spindle orientation checkpoint (SPOC) components and, therefore, could function as part of the sensors of spindle orientation defects. Required for cytoplasmic astral microtubule growth during mitosis. Is strictly required for mating and karyogamy. This Saccharomyces cerevisiae (strain ATCC 204508 / S288c) (Baker's yeast) protein is Gamma tubulin complex adapter SPC72 (SPC72).